A 208-amino-acid chain; its full sequence is Bacitracin transport permease protein BCRB (208 aa).

6 helical membrane passes run 23–43 (LYIV…YLFN), 70–90 (VLLL…TLLF), 111–131 (FMIG…VTLL), 135–155 (YVPT…VYGT), 159–179 (ALFP…PEYP), and 182–202 (YSFI…IVYF).

The protein localises to the cell membrane. Its function is as follows. Part of the binding-protein-dependent transport system for bacitracin that confer resistance to this antibiotic; probably responsible for the translocation of the substrate across the membrane. The sequence is that of Bacitracin transport permease protein BCRB (bcrB) from Bacillus licheniformis.